The chain runs to 286 residues: Pantothenate synthetase (286 aa).

Methionine 30 to histidine 37 is an ATP binding site. Histidine 37 serves as the catalytic Proton donor. Glutamine 61 contributes to the (R)-pantoate binding site. Position 61 (glutamine 61) interacts with beta-alanine. An ATP-binding site is contributed by glycine 147–aspartate 150. A (R)-pantoate-binding site is contributed by glutamine 153. An ATP-binding site is contributed by methionine 184 to arginine 187.

The protein belongs to the pantothenate synthetase family. As to quaternary structure, homodimer.

The protein localises to the cytoplasm. It carries out the reaction (R)-pantoate + beta-alanine + ATP = (R)-pantothenate + AMP + diphosphate + H(+). It participates in cofactor biosynthesis; (R)-pantothenate biosynthesis; (R)-pantothenate from (R)-pantoate and beta-alanine: step 1/1. In terms of biological role, catalyzes the condensation of pantoate with beta-alanine in an ATP-dependent reaction via a pantoyl-adenylate intermediate. The polypeptide is Pantothenate synthetase (Desulfotalea psychrophila (strain LSv54 / DSM 12343)).